Here is a 213-residue protein sequence, read N- to C-terminus: Octanoyltransferase (213 aa).

The region spanning 32-207 (ENTPDEIWLV…NILALLNNPP (176 aa)) is the BPL/LPL catalytic domain. Residues 71-78 (RGGQVTYH), 138-140 (SLG), and 151-153 (GLA) each bind substrate. Residue cysteine 169 is the Acyl-thioester intermediate of the active site.

This sequence belongs to the LipB family.

It is found in the cytoplasm. It carries out the reaction octanoyl-[ACP] + L-lysyl-[protein] = N(6)-octanoyl-L-lysyl-[protein] + holo-[ACP] + H(+). It functions in the pathway protein modification; protein lipoylation via endogenous pathway; protein N(6)-(lipoyl)lysine from octanoyl-[acyl-carrier-protein]: step 1/2. Its function is as follows. Catalyzes the transfer of endogenously produced octanoic acid from octanoyl-acyl-carrier-protein onto the lipoyl domains of lipoate-dependent enzymes. Lipoyl-ACP can also act as a substrate although octanoyl-ACP is likely to be the physiological substrate. In Citrobacter koseri (strain ATCC BAA-895 / CDC 4225-83 / SGSC4696), this protein is Octanoyltransferase.